Here is a 343-residue protein sequence, read N- to C-terminus: C-X-C chemokine receptor type 6 (343 aa).

At 1 to 33 (MAEYDHYEDDGFLNSFNDSSQEEHQDFLQFRKV) the chain is on the extracellular side. An N-linked (GlcNAc...) asparagine glycan is attached at N17. Residues 34–60 (FLPCMYLVVFVCGLVGNSLVLVISIFY) traverse the membrane as a helical segment. Residues 61–69 (HKLQSLTDV) lie on the Cytoplasmic side of the membrane. A helical transmembrane segment spans residues 70 to 90 (FLVNLPLADLVFVCTLPFWTY). Over 91 to 104 (AGIHEWIFGQVMCK) the chain is Extracellular. C103 and C181 form a disulfide bridge. The helical transmembrane segment at 105 to 126 (TLLGVYTINFYTSMLILTCITV) threads the bilayer. Over 127–144 (DRFIVVVKATKAYNQQAK) the chain is Cytoplasmic. Residues 145 to 165 (RMTWGKVICLLIWVISLLVSL) form a helical membrane-spanning segment. Residues 166-188 (PQIIYGNVFNLDKLICGYHDEEI) lie on the Extracellular side of the membrane. Residues 189 to 216 (STVVLATQMTLGFFLPLLAMIVCYSVII) traverse the membrane as a helical segment. Residues 217–232 (KTLLHAGGFQKHRSLK) lie on the Cytoplasmic side of the membrane. A helical transmembrane segment spans residues 233–260 (IIFLVMAVFLLTQTPFNLVKLIRSTRWE). At 261–276 (YYAMTSFHYTIIVTEA) the chain is on the extracellular side. Residues 277–294 (IAYLRACLNPVLYAFVSL) traverse the membrane as a helical segment. Residues 295–343 (KFRKNFWKLVKDIGCLPYLGVSHQWKSSEDNSKTFSASHNVEATSMFQL) lie on the Cytoplasmic side of the membrane.

The protein belongs to the G-protein coupled receptor 1 family.

Its subcellular location is the cell membrane. Its function is as follows. Receptor for the C-X-C chemokine CXCL16. Used as a coreceptor by SIVs and by strains of HIV-2 and m-tropic HIV-1. The protein is C-X-C chemokine receptor type 6 (CXCR6) of Macaca fascicularis (Crab-eating macaque).